The chain runs to 246 residues: Ribonuclease PH (246 aa).

Phosphate is bound by residues R91 and 129-131 (GTR).

It belongs to the RNase PH family. In terms of assembly, homohexameric ring arranged as a trimer of dimers.

It carries out the reaction tRNA(n+1) + phosphate = tRNA(n) + a ribonucleoside 5'-diphosphate. Phosphorolytic 3'-5' exoribonuclease that plays an important role in tRNA 3'-end maturation. Removes nucleotide residues following the 3'-CCA terminus of tRNAs; can also add nucleotides to the ends of RNA molecules by using nucleoside diphosphates as substrates, but this may not be physiologically important. Probably plays a role in initiation of 16S rRNA degradation (leading to ribosome degradation) during starvation. In Burkholderia orbicola (strain MC0-3), this protein is Ribonuclease PH.